A 177-amino-acid chain; its full sequence is Nicotinamide-nucleotide adenylyltransferase (177 aa).

Belongs to the archaeal NMN adenylyltransferase family.

The protein localises to the cytoplasm. It carries out the reaction beta-nicotinamide D-ribonucleotide + ATP + H(+) = diphosphate + NAD(+). The protein operates within cofactor biosynthesis; NAD(+) biosynthesis; NAD(+) from nicotinamide D-ribonucleotide: step 1/1. The chain is Nicotinamide-nucleotide adenylyltransferase from Halobacterium salinarum (strain ATCC 29341 / DSM 671 / R1).